Consider the following 122-residue polypeptide: Large ribosomal subunit protein uL14c (122 aa).

This sequence belongs to the universal ribosomal protein uL14 family. As to quaternary structure, part of the 50S ribosomal subunit.

Its subcellular location is the plastid. The protein resides in the chloroplast. Its function is as follows. Binds to 23S rRNA. The protein is Large ribosomal subunit protein uL14c of Staurastrum punctulatum (Green alga).